Here is a 693-residue protein sequence, read N- to C-terminus: UvrABC system protein B (693 aa).

Positions 35-188 (ERINNGEKDV…DQLLRQFVGI (154 aa)) constitute a Helicase ATP-binding domain. Residue 48–55 (GATGTGKS) participates in ATP binding. The short motif at 101–124 (YYDYYQPEAYVPQTDTFIEKDSSV) is the Beta-hairpin element. A Helicase C-terminal domain is found at 438-600 (QIDDLLGEIR…VDPTPLRKRI (163 aa)). Residues 612-634 (ADTKSLLESAGKGRSRGKAPVPV) are disordered. Positions 648–683 (VDLIEQLTAQMHSAAGELQFELAARLRDEVGDLKKE) constitute a UVR domain.

Belongs to the UvrB family. Forms a heterotetramer with UvrA during the search for lesions. Interacts with UvrC in an incision complex.

The protein resides in the cytoplasm. Functionally, the UvrABC repair system catalyzes the recognition and processing of DNA lesions. A damage recognition complex composed of 2 UvrA and 2 UvrB subunits scans DNA for abnormalities. Upon binding of the UvrA(2)B(2) complex to a putative damaged site, the DNA wraps around one UvrB monomer. DNA wrap is dependent on ATP binding by UvrB and probably causes local melting of the DNA helix, facilitating insertion of UvrB beta-hairpin between the DNA strands. Then UvrB probes one DNA strand for the presence of a lesion. If a lesion is found the UvrA subunits dissociate and the UvrB-DNA preincision complex is formed. This complex is subsequently bound by UvrC and the second UvrB is released. If no lesion is found, the DNA wraps around the other UvrB subunit that will check the other stand for damage. This is UvrABC system protein B from Renibacterium salmoninarum (strain ATCC 33209 / DSM 20767 / JCM 11484 / NBRC 15589 / NCIMB 2235).